The sequence spans 951 residues: Glycine dehydrogenase (decarboxylating) (951 aa).

K709 is subject to N6-(pyridoxal phosphate)lysine.

It belongs to the GcvP family. In terms of assembly, the glycine cleavage system is composed of four proteins: P, T, L and H. Requires pyridoxal 5'-phosphate as cofactor.

The enzyme catalyses N(6)-[(R)-lipoyl]-L-lysyl-[glycine-cleavage complex H protein] + glycine + H(+) = N(6)-[(R)-S(8)-aminomethyldihydrolipoyl]-L-lysyl-[glycine-cleavage complex H protein] + CO2. In terms of biological role, the glycine cleavage system catalyzes the degradation of glycine. The P protein binds the alpha-amino group of glycine through its pyridoxal phosphate cofactor; CO(2) is released and the remaining methylamine moiety is then transferred to the lipoamide cofactor of the H protein. The sequence is that of Glycine dehydrogenase (decarboxylating) from Gluconobacter oxydans (strain 621H) (Gluconobacter suboxydans).